Reading from the N-terminus, the 137-residue chain is Fatty acid-binding protein homolog 7 (137 aa).

It belongs to the calycin superfamily. Fatty-acid binding protein (FABP) family.

This chain is Fatty acid-binding protein homolog 7 (lbp-7), found in Caenorhabditis elegans.